Reading from the N-terminus, the 750-residue chain is 5-methyltetrahydropteroyltriglutamate--homocysteine methyltransferase (750 aa).

Residues 15–18 (RELK) and Lys114 each bind 5-methyltetrahydropteroyltri-L-glutamate. L-homocysteine is bound by residues 425 to 427 (IGS) and Glu478. L-methionine contacts are provided by residues 425–427 (IGS) and Glu478. Trp555 serves as a coordination point for 5-methyltetrahydropteroyltri-L-glutamate. Asp593 provides a ligand contact to L-homocysteine. Asp593 provides a ligand contact to L-methionine. 5-methyltetrahydropteroyltri-L-glutamate is bound at residue Glu599. Residues His636, Cys638, and Glu660 each contribute to the Zn(2+) site. His689 acts as the Proton donor in catalysis. Zn(2+) is bound at residue Cys721.

Belongs to the vitamin-B12 independent methionine synthase family. It depends on Zn(2+) as a cofactor.

The enzyme catalyses 5-methyltetrahydropteroyltri-L-glutamate + L-homocysteine = tetrahydropteroyltri-L-glutamate + L-methionine. Its pathway is amino-acid biosynthesis; L-methionine biosynthesis via de novo pathway; L-methionine from L-homocysteine (MetE route): step 1/1. Its function is as follows. Catalyzes the transfer of a methyl group from 5-methyltetrahydrofolate to homocysteine resulting in methionine formation. This is 5-methyltetrahydropteroyltriglutamate--homocysteine methyltransferase from Streptococcus gordonii (strain Challis / ATCC 35105 / BCRC 15272 / CH1 / DL1 / V288).